A 426-amino-acid polypeptide reads, in one-letter code: Glutamyl-tRNA(Gln) amidotransferase subunit D (426 aa).

Positions 82-413 (KNISILSTGG…KDAKKLICKN (332 aa)) constitute an Asparaginase/glutaminase domain. Residues Thr92, Thr168, Asp169, and Lys245 contribute to the active site.

It belongs to the asparaginase 1 family. GatD subfamily. As to quaternary structure, heterodimer of GatD and GatE.

It catalyses the reaction L-glutamyl-tRNA(Gln) + L-glutamine + ATP + H2O = L-glutaminyl-tRNA(Gln) + L-glutamate + ADP + phosphate + H(+). In terms of biological role, allows the formation of correctly charged Gln-tRNA(Gln) through the transamidation of misacylated Glu-tRNA(Gln) in organisms which lack glutaminyl-tRNA synthetase. The reaction takes place in the presence of glutamine and ATP through an activated gamma-phospho-Glu-tRNA(Gln). The GatDE system is specific for glutamate and does not act on aspartate. The chain is Glutamyl-tRNA(Gln) amidotransferase subunit D from Methanococcus vannielii (strain ATCC 35089 / DSM 1224 / JCM 13029 / OCM 148 / SB).